Reading from the N-terminus, the 311-residue chain is Pyrimidine-specific ribonucleoside hydrolase RihA (311 aa).

Histidine 240 is an active-site residue.

The protein belongs to the IUNH family. RihA subfamily.

Hydrolyzes cytidine or uridine to ribose and cytosine or uracil, respectively. The chain is Pyrimidine-specific ribonucleoside hydrolase RihA from Salmonella newport (strain SL254).